The sequence spans 61 residues: Small ribosomal subunit protein uS14B (61 aa).

Zn(2+)-binding residues include C24, C27, C40, and C43.

The protein belongs to the universal ribosomal protein uS14 family. Zinc-binding uS14 subfamily. As to quaternary structure, part of the 30S ribosomal subunit. Contacts proteins S3 and S10. Zn(2+) serves as cofactor.

Its function is as follows. Binds 16S rRNA, required for the assembly of 30S particles and may also be responsible for determining the conformation of the 16S rRNA at the A site. This chain is Small ribosomal subunit protein uS14B, found in Staphylococcus epidermidis (strain ATCC 35984 / DSM 28319 / BCRC 17069 / CCUG 31568 / BM 3577 / RP62A).